The following is a 420-amino-acid chain: Isocitrate dehydrogenase [NADP] (420 aa).

NADP(+)-binding positions include 75–77 (TIT) and Arg-82. Thr-77 is a binding site for substrate. Residues 94 to 100 (SPNGTIR), Arg-109, and Arg-132 contribute to the substrate site. Asp-252 serves as a coordination point for Mn(2+). Residue Lys-260 participates in NADP(+) binding. Asp-275 contributes to the Mn(2+) binding site. NADP(+) contacts are provided by residues 310-315 (GTVTRH) and Asn-328.

It belongs to the isocitrate and isopropylmalate dehydrogenases family. Mg(2+) is required as a cofactor. Mn(2+) serves as cofactor.

It carries out the reaction D-threo-isocitrate + NADP(+) = 2-oxoglutarate + CO2 + NADPH. May function in the production of NADPH for fatty acid and sterol synthesis. The chain is Isocitrate dehydrogenase [NADP] (IDP3) from Saccharomyces cerevisiae (strain ATCC 204508 / S288c) (Baker's yeast).